The following is a 300-amino-acid chain: Cation-efflux pump FieF (300 aa).

4 helical membrane passes run 12-32 (AAIA…FAWW), 39-59 (ILAA…NLLV), 82-102 (AALA…LTGI), and 114-134 (PGVG…LVSF). Zn(2+) contacts are provided by Asp45 and Asp49. Positions 153 and 157 each coordinate Zn(2+). 2 helical membrane passes run 156–176 (SDVM…YGWH) and 178–198 (ADAL…LRMG).

It belongs to the cation diffusion facilitator (CDF) transporter (TC 2.A.4) family. FieF subfamily. In terms of assembly, homodimer.

Its subcellular location is the cell inner membrane. It catalyses the reaction Zn(2+)(in) + H(+)(out) = Zn(2+)(out) + H(+)(in). The enzyme catalyses Cd(2+)(in) + H(+)(out) = Cd(2+)(out) + H(+)(in). It carries out the reaction Fe(2+)(in) + H(+)(out) = Fe(2+)(out) + H(+)(in). Divalent metal cation transporter which exports Zn(2+), Cd(2+) and possibly Fe(2+). May be involved in zinc and iron detoxification by efflux. This chain is Cation-efflux pump FieF, found in Escherichia coli O7:K1 (strain IAI39 / ExPEC).